The sequence spans 195 residues: CASP-like protein 1B1 (195 aa).

At 1 to 25 (MDLEKGKKPSEQAAACRIMQVKDKL) the chain is on the cytoplasmic side. The chain crosses the membrane as a helical span at residues 26–46 (ITLQPVVRACVFLATAVAAVI). Topologically, residues 47 to 78 (MGLNKQSYTTVVAIVGTRPVTQTFTAKFKDTP) are extracellular. The chain crosses the membrane as a helical span at residues 79–99 (AFVFFVIANAIASGYNLMVLV). Residues 100–114 (TRRILQRRAQSLSVH) lie on the Cytoplasmic side of the membrane. Residues 115–135 (LLDMVILTLLATGSATAASMA) form a helical membrane-spanning segment. Topologically, residues 136 to 160 (QLGKNGNLHARWNPICDKFGSFCNH) are extracellular. A helical membrane pass occupies residues 161 to 181 (GGIALMSSFIGVALMLALNLL). The Cytoplasmic segment spans residues 182-195 (SAAANSPRSNVTGQ).

Belongs to the Casparian strip membrane proteins (CASP) family. Homodimer and heterodimers.

It is found in the cell membrane. The polypeptide is CASP-like protein 1B1 (Oryza sativa subsp. indica (Rice)).